The primary structure comprises 721 residues: Dipeptidyl-peptidase 5 (721 aa).

An N-terminal signal peptide occupies residues 1-18; that stretch reads MGAFRWLSIAAAASTALA. N-linked (GlcNAc...) asparagine glycosylation is found at Asn-75, Asn-94, Asn-151, and Asn-254. Residues 271-297 are disordered; it reads ARPINGPDSPGTPKGIKGDSSSPVFSP. 2 N-linked (GlcNAc...) asparagine glycosylation sites follow: Asn-380 and Asn-450. The active-site Charge relay system is Ser-560. A glycan (N-linked (GlcNAc...) asparagine) is linked at Asn-607. Catalysis depends on charge relay system residues Asp-643 and His-675.

The protein belongs to the peptidase S9C family. Post-translationally, N-glycosylated. In terms of tissue distribution, expressed in mycelia and conidia.

Its subcellular location is the secreted. Its function is as follows. May be involved in metabolism of dipeptides or may affect host defense mechanisms. Has a substrate specificity limited to the hydrolysis of X-Ala, His-Ser, and Ser-Tyr dipeptides at a neutral pH optimum. The polypeptide is Dipeptidyl-peptidase 5 (Aspergillus fumigatus (strain ATCC MYA-4609 / CBS 101355 / FGSC A1100 / Af293) (Neosartorya fumigata)).